The sequence spans 716 residues: Zinc finger CCCH domain-containing protein 30 (716 aa).

2 ANK repeats span residues 90–120 (DYRT…DVNR) and 125–157 (DQTT…DLNL). The interval 201–231 (VTNVPNRSSSPCHSPTGENGGSGSGSPLGSP) is disordered. A compositionally biased stretch (polar residues) spans 203 to 213 (NVPNRSSSPCH). C3H1-type zinc fingers lie at residues 306–328 (PCPD…HGVF) and 336–360 (QYRT…HTPE). Residues 521-562 (FQQQQQQQQSMLSPINTSFSSPKSVDHSLFSGGGRMSPRNVV) are disordered. The segment covering 530–543 (SMLSPINTSFSSPK) has biased composition (polar residues). Position 566 is a phosphoserine (serine 566). The span at 583-594 (QQQQQQQQQQHQ) shows a compositional bias: low complexity. Disordered stretches follow at residues 583 to 638 (QQQQ…MSSE) and 667 to 692 (PAEA…PVEP). Residues 605 to 630 (TNSSPIVGSPVNNNTWSSKWGSSNGQ) are compositionally biased toward polar residues.

In Arabidopsis thaliana (Mouse-ear cress), this protein is Zinc finger CCCH domain-containing protein 30.